Here is a 114-residue protein sequence, read N- to C-terminus: Large ribosomal subunit protein bL19 (114 aa).

Belongs to the bacterial ribosomal protein bL19 family.

Functionally, this protein is located at the 30S-50S ribosomal subunit interface and may play a role in the structure and function of the aminoacyl-tRNA binding site. This Clostridium botulinum (strain ATCC 19397 / Type A) protein is Large ribosomal subunit protein bL19.